Here is a 444-residue protein sequence, read N- to C-terminus: Exodeoxyribonuclease 7 large subunit (444 aa).

Belongs to the XseA family. Heterooligomer composed of large and small subunits.

It is found in the cytoplasm. It catalyses the reaction Exonucleolytic cleavage in either 5'- to 3'- or 3'- to 5'-direction to yield nucleoside 5'-phosphates.. Its function is as follows. Bidirectionally degrades single-stranded DNA into large acid-insoluble oligonucleotides, which are then degraded further into small acid-soluble oligonucleotides. The chain is Exodeoxyribonuclease 7 large subunit from Aliivibrio salmonicida (strain LFI1238) (Vibrio salmonicida (strain LFI1238)).